Here is a 343-residue protein sequence, read N- to C-terminus: Glyceraldehyde-3-phosphate dehydrogenase (343 aa).

Residues 13–14 (TI) and Gly-111 each bind NAD(+). 140–142 (SCN) contributes to the D-glyceraldehyde 3-phosphate binding site. Cys-141 acts as the Nucleophile in catalysis. Residue Arg-169 coordinates NAD(+). 195–196 (HA) is a D-glyceraldehyde 3-phosphate binding site. Position 303 (Gln-303) interacts with NAD(+).

It belongs to the glyceraldehyde-3-phosphate dehydrogenase family. As to quaternary structure, homotetramer.

It is found in the cytoplasm. The catalysed reaction is D-glyceraldehyde 3-phosphate + phosphate + NADP(+) = (2R)-3-phospho-glyceroyl phosphate + NADPH + H(+). It carries out the reaction D-glyceraldehyde 3-phosphate + phosphate + NAD(+) = (2R)-3-phospho-glyceroyl phosphate + NADH + H(+). Its pathway is carbohydrate degradation; glycolysis; pyruvate from D-glyceraldehyde 3-phosphate: step 1/5. This chain is Glyceraldehyde-3-phosphate dehydrogenase, found in Sulfurisphaera tokodaii (strain DSM 16993 / JCM 10545 / NBRC 100140 / 7) (Sulfolobus tokodaii).